The sequence spans 87 residues: MALPGERFHVLAQLEHLQSKYTGTAMRHEPSRMDCESAPRHSRLSNVSSRNEHVYCRCGEREPSSNPLQSDKSHDSAVWTASREESS.

Positions 23–87 (GTAMRHEPSR…VWTASREESS (65 aa)) are disordered. 2 stretches are compositionally biased toward basic and acidic residues: residues 26 to 39 (MRHE…ESAP) and 50 to 63 (RNEH…EREP).

The chain is Protein moa-2 from Caenorhabditis elegans.